A 220-amino-acid polypeptide reads, in one-letter code: Octanoyltransferase (220 aa).

One can recognise a BPL/LPL catalytic domain in the interval 27–208 (PGTADEIWLC…QLARAHGHAV (182 aa)). Substrate-binding positions include 66 to 73 (RGGQVTYH), 139 to 141 (ALG), and 152 to 154 (GLA). The active-site Acyl-thioester intermediate is Cys-170.

Belongs to the LipB family.

It is found in the cytoplasm. It catalyses the reaction octanoyl-[ACP] + L-lysyl-[protein] = N(6)-octanoyl-L-lysyl-[protein] + holo-[ACP] + H(+). Its pathway is protein modification; protein lipoylation via endogenous pathway; protein N(6)-(lipoyl)lysine from octanoyl-[acyl-carrier-protein]: step 1/2. Catalyzes the transfer of endogenously produced octanoic acid from octanoyl-acyl-carrier-protein onto the lipoyl domains of lipoate-dependent enzymes. Lipoyl-ACP can also act as a substrate although octanoyl-ACP is likely to be the physiological substrate. This is Octanoyltransferase from Bordetella parapertussis (strain 12822 / ATCC BAA-587 / NCTC 13253).